The sequence spans 195 residues: HTH-type transcriptional regulator BetI (195 aa).

Residues 8 to 68 (EIRRAQLIDA…ATMRHVLRDL (61 aa)) form the HTH tetR-type domain. Residues 31–50 (TLASVAQRASISTGIVSHYF) constitute a DNA-binding region (H-T-H motif).

It functions in the pathway amine and polyamine biosynthesis; betaine biosynthesis via choline pathway [regulation]. In terms of biological role, repressor involved in the biosynthesis of the osmoprotectant glycine betaine. It represses transcription of the choline transporter BetT and the genes of BetAB involved in the synthesis of glycine betaine. This chain is HTH-type transcriptional regulator BetI, found in Paraburkholderia xenovorans (strain LB400).